The sequence spans 240 residues: Putative exosome complex component RRP41 (240 aa).

Belongs to the RNase PH family. Component of the RNA exosome complex.

The protein resides in the cytoplasm. It localises to the nucleus. Its subcellular location is the nucleolus. It is found in the nucleoplasm. Functionally, non-catalytic component of the RNA exosome complex which has 3'-&gt;5' exoribonuclease activity and participates in a multitude of cellular RNA processing and degradation events. In Caenorhabditis briggsae, this protein is Putative exosome complex component RRP41 (exos-4.1).